The chain runs to 779 residues: Nucleus-vacuole junction protein 2 (779 aa).

Residues 1 to 2 (MF) lie on the Cytoplasmic side of the membrane. Residues 3–23 (FAFLITYLLGGVTFLPFILFI) form a helical; Signal-anchor for type II membrane protein membrane-spanning segment. Residues 24-779 (YLLTRPTHKS…VRPVPPIPKL (756 aa)) are Lumenal-facing. Residue Asn233 is glycosylated (N-linked (GlcNAc...) asparagine). One can recognise an SMP-LTD domain in the interval 238-429 (SSPDTDWLNA…MPNMNDLAFF (192 aa)). The segment covering 454 to 465 (PAEKDAKAERKK) has biased composition (basic and acidic residues). 2 disordered regions span residues 454-539 (PAEK…NKSS) and 573-592 (LKTK…QTTL). The residue at position 473 (Ser473) is a Phosphoserine. The span at 484-494 (RSSNSNDTAPS) shows a compositional bias: polar residues. 2 N-linked (GlcNAc...) asparagine glycosylation sites follow: Asn489 and Asn536. N-linked (GlcNAc...) asparagine glycosylation is found at Asn640 and Asn660. The disordered stretch occupies residues 654 to 779 (QNAIDFNVTN…VRPVPPIPKL (126 aa)). Residues 660–674 (NVTNTHSPSRSISSE) show a composition bias toward polar residues. Basic and acidic residues predominate over residues 675-691 (KSYKAAERGQQDKHNDV). Polar residues predominate over residues 733–750 (GQPTLHPQGQLPIQNVEQ).

It localises to the endoplasmic reticulum membrane. It is found in the nucleus membrane. Functionally, during endoplasmic reticulum (ER) stress or when cellular ceramide levels increase, induces contacts between the ER and medial-Golgi complex to facilitate non-vesicular transport of ceramides from the ER to the Golgi complex where they are converted to complex sphingolipids, preventing toxic ceramide accumulation. The sequence is that of Nucleus-vacuole junction protein 2 (nvj2) from Schizosaccharomyces pombe (strain 972 / ATCC 24843) (Fission yeast).